A 450-amino-acid polypeptide reads, in one-letter code: Casein kinase 1-like protein 1 (450 aa).

Residues 9 to 278 (FRLGRKIGSG…LKRIFRDLFI (270 aa)) form the Protein kinase domain. Residues 15 to 23 (IGSGSFGEI) and Lys38 contribute to the ATP site. Asp128 (proton acceptor) is an active-site residue. A disordered region spans residues 311–450 (AVGTSAALPP…LQVSDEHHPH (140 aa)). The segment covering 328–342 (YTGEEEGRPHMESSR) has biased composition (basic and acidic residues). The segment covering 349–365 (LDNSGNISNQPTSSSAR) has biased composition (polar residues). Positions 371-382 (SSSLFAQSAGSS) are enriched in low complexity.

It belongs to the protein kinase superfamily. CK1 Ser/Thr protein kinase family. Casein kinase I subfamily. In terms of assembly, monomer. Autophosphorylated. As to expression, expressed in flowers.

Its subcellular location is the cytoplasm. It localises to the cell junction. It is found in the plasmodesma. The catalysed reaction is L-seryl-[protein] + ATP = O-phospho-L-seryl-[protein] + ADP + H(+). It catalyses the reaction L-threonyl-[protein] + ATP = O-phospho-L-threonyl-[protein] + ADP + H(+). Casein kinases are operationally defined by their preferential utilization of acidic proteins such as caseins as substrates. It can phosphorylate a large number of proteins. The polypeptide is Casein kinase 1-like protein 1 (Arabidopsis thaliana (Mouse-ear cress)).